Consider the following 751-residue polypeptide: Centrosomal protein of 68 kDa (751 aa).

Basic and acidic residues-rich tracts occupy residues 1–17 (MALG…EDTK) and 86–96 (ASREPVAERSE). The interval 1–253 (MALGEEKAEA…PQPVFSGGDA (253 aa)) is disordered. 2 stretches are compositionally biased toward polar residues: residues 131-144 (LPQT…TTIC) and 163-175 (APSS…SQWK). Low complexity predominate over residues 176-200 (SMPSPGSAAPQPSSCSVSASSTGSS). At serine 326 the chain carries Phosphoserine. Over residues 339–348 (STLKSPTNVF) the composition is skewed to polar residues. 3 disordered regions span residues 339-474 (STLK…ESDD), 511-545 (SPLE…SGDP), and 590-611 (RLDR…KGGE). Composition is skewed to basic and acidic residues over residues 399-416 (GSRD…RGAK) and 433-450 (RTRD…EKRT). Over residues 451–461 (SQSARRPTCTE) the composition is skewed to polar residues. Phosphoserine occurs at positions 466 and 472. Low complexity predominate over residues 520–537 (GPASLPSSSSQSQLPPGA).

In terms of assembly, interacts with CNTLN; the interaction recruits CEP68 to the centrosome. Interacts with the SCF(FBXW11) complex which contains SKP1, CUL1 and FBXW11; the interaction is probably mediated by FBXW11 and the complex also contains CDK5RAP2 and PCNT. Also interacts with F-box protein BTRC. Interacts with serine/threonine-protein kinase PLK1; the interaction leads to phosphorylation of CEP68 and its subsequent degradation. Interacts with NEK2; the interaction leads to phosphorylation of CEP68. In terms of processing, phosphorylation by PLK1 is required for binding to BTRC in prometaphase. Phosphorylated directly or indirectly by NEK2. NEK2-mediated phosphorylation promotes CEP68 dissociation from the centrosome and its degradation at the onset of mitosis. Post-translationally, ubiquitinated and targeted for proteasomal degradation in early mitosis by the SCF(BTRC) and/or SCF(FBXW11) E3 ubiquitin-protein ligase complexes. Degradation is complete by prometaphase and is required for removal of CDK5RAP2 from the peripheral pericentriolar material and subsequent centriole separation.

Its subcellular location is the cytoplasm. It localises to the cytoskeleton. The protein resides in the microtubule organizing center. It is found in the centrosome. Functionally, involved in maintenance of centrosome cohesion, probably as part of a linker structure which prevents centrosome splitting. Required for localization of CDK5RAP2 to the centrosome during interphase. Contributes to CROCC/rootletin filament formation. The protein is Centrosomal protein of 68 kDa (CEP68) of Pongo abelii (Sumatran orangutan).